Consider the following 334-residue polypeptide: MKPRVMILLGSASDFRIAEKAMEIFEELRIPYDLRVASAHRTHEKVKAIVSEAVKAGVEVFIGIAGLSAHLPGMISANTHRPVIGVPVDVKLGGLDALFACSQMPFPAPVATVGVDRGENAAILAAQIIGIGDPGVRERVADLRRGFYERVRRDECQVLNSIEGSYYAPLEVEMPPIGDKVPSDSQDDPMVSVIPGSYSDMKIAKKTTMFLERMGISYDLNVISPIRYPERFERYLEKMENVKLFIAISGLSAHVTGAVVALSDRPVIGVPCPLKMNGWDSLLSMINMPPGVPVGTVGVGNGGNAAILAAEMLGIYDEKIESRIKRIKSRSVKF.

S11, D14, and R41 together coordinate substrate.

It belongs to the AIR carboxylase family. Class I subfamily.

It catalyses the reaction 5-carboxyamino-1-(5-phospho-D-ribosyl)imidazole + H(+) = 5-amino-1-(5-phospho-D-ribosyl)imidazole-4-carboxylate. It participates in purine metabolism; IMP biosynthesis via de novo pathway; 5-amino-1-(5-phospho-D-ribosyl)imidazole-4-carboxylate from 5-amino-1-(5-phospho-D-ribosyl)imidazole (N5-CAIR route): step 2/2. Functionally, catalyzes the conversion of N5-carboxyaminoimidazole ribonucleotide (N5-CAIR) to 4-carboxy-5-aminoimidazole ribonucleotide (CAIR). In Methanothermobacter thermautotrophicus (strain ATCC 29096 / DSM 1053 / JCM 10044 / NBRC 100330 / Delta H) (Methanobacterium thermoautotrophicum), this protein is Probable N5-carboxyaminoimidazole ribonucleotide mutase.